The sequence spans 365 residues: Chorismate synthase (365 aa).

NADP(+)-binding residues include Arg48 and Arg54. Residues Arg125–Ser127, Asn238–Ala239, Gly278, Lys293–Ser297, and Arg319 each bind FMN.

The protein belongs to the chorismate synthase family. In terms of assembly, homotetramer. It depends on FMNH2 as a cofactor.

The enzyme catalyses 5-O-(1-carboxyvinyl)-3-phosphoshikimate = chorismate + phosphate. The protein operates within metabolic intermediate biosynthesis; chorismate biosynthesis; chorismate from D-erythrose 4-phosphate and phosphoenolpyruvate: step 7/7. Functionally, catalyzes the anti-1,4-elimination of the C-3 phosphate and the C-6 proR hydrogen from 5-enolpyruvylshikimate-3-phosphate (EPSP) to yield chorismate, which is the branch point compound that serves as the starting substrate for the three terminal pathways of aromatic amino acid biosynthesis. This reaction introduces a second double bond into the aromatic ring system. In Alteromonas mediterranea (strain DSM 17117 / CIP 110805 / LMG 28347 / Deep ecotype), this protein is Chorismate synthase.